Consider the following 214-residue polypeptide: Nucleoside triphosphate pyrophosphatase (214 aa).

Residue aspartate 79 is the Proton acceptor of the active site.

The protein belongs to the Maf family. It depends on a divalent metal cation as a cofactor.

The protein localises to the cytoplasm. The catalysed reaction is a ribonucleoside 5'-triphosphate + H2O = a ribonucleoside 5'-phosphate + diphosphate + H(+). It carries out the reaction a 2'-deoxyribonucleoside 5'-triphosphate + H2O = a 2'-deoxyribonucleoside 5'-phosphate + diphosphate + H(+). In terms of biological role, nucleoside triphosphate pyrophosphatase. May have a dual role in cell division arrest and in preventing the incorporation of modified nucleotides into cellular nucleic acids. In Rhodococcus jostii (strain RHA1), this protein is Nucleoside triphosphate pyrophosphatase.